The following is a 371-amino-acid chain: tRNA-specific 2-thiouridylase MnmA (371 aa).

Residues 22-29 (GLSGGVDS) and M48 contribute to the ATP site. Residues 108–110 (NPD) form an interaction with target base in tRNA region. C113 serves as the catalytic Nucleophile. A disulfide bond links C113 and C209. G137 is an ATP binding site. An interaction with tRNA region spans residues 159–161 (KDQ). Catalysis depends on C209, which acts as the Cysteine persulfide intermediate.

The protein belongs to the MnmA/TRMU family.

It is found in the cytoplasm. The catalysed reaction is S-sulfanyl-L-cysteinyl-[protein] + uridine(34) in tRNA + AH2 + ATP = 2-thiouridine(34) in tRNA + L-cysteinyl-[protein] + A + AMP + diphosphate + H(+). Functionally, catalyzes the 2-thiolation of uridine at the wobble position (U34) of tRNA, leading to the formation of s(2)U34. The chain is tRNA-specific 2-thiouridylase MnmA from Coxiella burnetii (strain CbuG_Q212) (Coxiella burnetii (strain Q212)).